Reading from the N-terminus, the 365-residue chain is Spermine synthase (365 aa).

At A2 the chain carries N-acetylalanine. A Phosphoserine modification is found at S57. Residues 121-361 (RYWPTADGRL…ELWVFYTVWK (241 aa)) enclose the PABS domain. Q147 provides a ligand contact to S-adenosyl 3-(methylsulfanyl)propylamine. The spermidine site is built by Y176 and D200. S-adenosyl 3-(methylsulfanyl)propylamine is bound by residues E219 and 254–255 (DC). D275 serves as the catalytic Proton acceptor. Spermidine contacts are provided by Y350 and E352.

This sequence belongs to the spermidine/spermine synthase family. In terms of assembly, homodimer. Dimerization is mediated through the N-terminal domain and seems to be required for activity as deletion of the N-terminal domain causes complete loss of activity.

It carries out the reaction S-adenosyl 3-(methylsulfanyl)propylamine + spermidine = spermine + S-methyl-5'-thioadenosine + H(+). It functions in the pathway amine and polyamine biosynthesis; spermine biosynthesis; spermine from spermidine: step 1/1. In terms of biological role, catalyzes the production of spermine from spermidine and decarboxylated S-adenosylmethionine (dcSAM). The chain is Spermine synthase (SMS) from Bos taurus (Bovine).